The chain runs to 635 residues: Probable extracellular metalloproteinase 1 (635 aa).

An N-terminal signal peptide occupies residues 1–19 (MHGLLLAAGLLSLPLHVLA). Positions 20-246 (HPQPSTSTSL…VHNVVDYVAH (227 aa)) are excised as a propeptide. Asn-287 carries an N-linked (GlcNAc...) asparagine glycan. His-430 contributes to the Zn(2+) binding site. Glu-431 is an active-site residue. His-434 serves as a coordination point for Zn(2+). N-linked (GlcNAc...) asparagine glycans are attached at residues Asn-475, Asn-594, and Asn-623.

Belongs to the peptidase M36 family. Zn(2+) serves as cofactor.

The protein resides in the secreted. In terms of biological role, secreted metalloproteinase probably acting as a virulence factor. This Trichophyton verrucosum (strain HKI 0517) protein is Probable extracellular metalloproteinase 1 (MEP1).